Here is a 375-residue protein sequence, read N- to C-terminus: Queuine tRNA-ribosyltransferase (375 aa).

Catalysis depends on aspartate 89, which acts as the Proton acceptor. Substrate is bound by residues 89–93 (DSGGF), aspartate 143, glutamine 187, and glycine 214. The segment at 245–251 (GVGKPED) is RNA binding. The Nucleophile role is filled by aspartate 264. The tract at residues 269-273 (TRNAR) is RNA binding; important for wobble base 34 recognition. Zn(2+)-binding residues include cysteine 302, cysteine 304, cysteine 307, and histidine 333.

Belongs to the queuine tRNA-ribosyltransferase family. As to quaternary structure, homodimer. Within each dimer, one monomer is responsible for RNA recognition and catalysis, while the other monomer binds to the replacement base PreQ1. Zn(2+) serves as cofactor.

The catalysed reaction is 7-aminomethyl-7-carbaguanine + guanosine(34) in tRNA = 7-aminomethyl-7-carbaguanosine(34) in tRNA + guanine. It participates in tRNA modification; tRNA-queuosine biosynthesis. Functionally, catalyzes the base-exchange of a guanine (G) residue with the queuine precursor 7-aminomethyl-7-deazaguanine (PreQ1) at position 34 (anticodon wobble position) in tRNAs with GU(N) anticodons (tRNA-Asp, -Asn, -His and -Tyr). Catalysis occurs through a double-displacement mechanism. The nucleophile active site attacks the C1' of nucleotide 34 to detach the guanine base from the RNA, forming a covalent enzyme-RNA intermediate. The proton acceptor active site deprotonates the incoming PreQ1, allowing a nucleophilic attack on the C1' of the ribose to form the product. After dissociation, two additional enzymatic reactions on the tRNA convert PreQ1 to queuine (Q), resulting in the hypermodified nucleoside queuosine (7-(((4,5-cis-dihydroxy-2-cyclopenten-1-yl)amino)methyl)-7-deazaguanosine). The polypeptide is Queuine tRNA-ribosyltransferase (Escherichia coli O81 (strain ED1a)).